The following is a 94-amino-acid chain: Large ribosomal subunit protein uL29 (94 aa).

Residues 66–94 (NPGERKSRVLSRAKRKKKNLARLSAKVKG) are disordered. Over residues 73-94 (RVLSRAKRKKKNLARLSAKVKG) the composition is skewed to basic residues.

The protein belongs to the universal ribosomal protein uL29 family.

The chain is Large ribosomal subunit protein uL29 from Leptospira borgpetersenii serovar Hardjo-bovis (strain JB197).